A 554-amino-acid chain; its full sequence is ATP-dependent RNA helicase MRH4, mitochondrial (554 aa).

The transit peptide at 1–54 (MSSVGIASASLWLRGPVKSALKGRWLSCEQMRRYGTKSAPAVRKGGHSKKARQA) directs the protein to the mitochondrion. A Q motif motif is present at residues 119-140 (DCGLDDKRVAAFLGQVQPTPIQ). The 188-residue stretch at 150 to 337 (TLMEPQLQVH…NKLFPNLQVV (188 aa)) folds into the Helicase ATP-binding domain. ATP is bound at residue 163–170 (AETGSGKT). Positions 285 to 288 (DEAD) match the DEAD box motif. The region spanning 368–554 (ALAQALYAIM…PVVKKNRPIQ (187 aa)) is the Helicase C-terminal domain. The segment at 439–474 (RIQDQVRPSELKKPQERRLPNSNIKVADSKDNGQRS) is disordered. The segment covering 445 to 457 (RPSELKKPQERRL) has biased composition (basic and acidic residues).

The protein belongs to the DEAD box helicase family. MRH4 subfamily.

The protein resides in the mitochondrion. The enzyme catalyses ATP + H2O = ADP + phosphate + H(+). Functionally, ATP-binding RNA helicase involved in mitochondrial RNA metabolism. Required for maintenance of mitochondrial DNA. This Eremothecium gossypii (strain ATCC 10895 / CBS 109.51 / FGSC 9923 / NRRL Y-1056) (Yeast) protein is ATP-dependent RNA helicase MRH4, mitochondrial (MRH4).